A 313-amino-acid polypeptide reads, in one-letter code: Ribosomal RNA small subunit methyltransferase H (313 aa).

Residues 35–37 (GGH), Asp55, Phe79, Asp101, and Gln108 contribute to the S-adenosyl-L-methionine site.

The protein belongs to the methyltransferase superfamily. RsmH family.

The protein localises to the cytoplasm. The catalysed reaction is cytidine(1402) in 16S rRNA + S-adenosyl-L-methionine = N(4)-methylcytidine(1402) in 16S rRNA + S-adenosyl-L-homocysteine + H(+). In terms of biological role, specifically methylates the N4 position of cytidine in position 1402 (C1402) of 16S rRNA. This chain is Ribosomal RNA small subunit methyltransferase H, found in Enterobacter sp. (strain 638).